Consider the following 480-residue polypeptide: NADH-quinone oxidoreductase subunit N 1 (480 aa).

14 helical membrane passes run Leu12–Phe32, Thr38–Leu58, Phe78–Ala98, Phe106–Asn126, Leu128–Ile148, Phe163–Phe183, Leu203–Val223, Thr241–Ile261, Trp271–Ile291, Ser303–Val323, Val326–Ala346, Ala372–Phe392, Phe396–Ala416, and Leu449–Gly469.

The protein belongs to the complex I subunit 2 family. NDH-1 is composed of 14 different subunits. Subunits NuoA, H, J, K, L, M, N constitute the membrane sector of the complex.

The protein localises to the cell inner membrane. It catalyses the reaction a quinone + NADH + 5 H(+)(in) = a quinol + NAD(+) + 4 H(+)(out). In terms of biological role, NDH-1 shuttles electrons from NADH, via FMN and iron-sulfur (Fe-S) centers, to quinones in the respiratory chain. The immediate electron acceptor for the enzyme in this species is believed to be ubiquinone. Couples the redox reaction to proton translocation (for every two electrons transferred, four hydrogen ions are translocated across the cytoplasmic membrane), and thus conserves the redox energy in a proton gradient. The sequence is that of NADH-quinone oxidoreductase subunit N 1 from Rhizobium meliloti (strain 1021) (Ensifer meliloti).